The chain runs to 345 residues: MSDTSEEKSHGATPKKLSDARKRGQIPRSSDFVRAAATCAGLGYLWLRGSVIEDKCREALLLTDKLQNLPFNLAVRQALVLLVELTLATVGPLLSALFGAVILAALLANRGFVFSLEPMKPNFDKINPFQWLKRLGSARSAVEVGKTLFKVLVLGGTFSLFFLGLWKTMVYLPVCGMGCFGVVFTGAKQLIGIGAGALLIGGLIDLLLQRALFLREMRMTKTEIKRELKEQQGTPELKGERRRIRNEMASEPPLGVHRATLVYRGTAVLIGLRYVRGETGVPILVCRAEGEAASDMFREAQNLRLKIVDDHVLAHQLMSTTKLGTAIPMQYFEPIARALLAAGLA.

Residues 1–22 are compositionally biased toward basic and acidic residues; the sequence is MSDTSEEKSHGATPKKLSDARK. The tract at residues 1–25 is disordered; that stretch reads MSDTSEEKSHGATPKKLSDARKRGQ. The next 3 helical transmembrane spans lie at 87–107, 151–171, and 189–209; these read LATV…AALL, VLVL…TMVY, and QLIG…LLLQ.

It belongs to the type III secretion exporter family.

It is found in the cell membrane. In terms of biological role, could be involved in the secretion of an unknown factor. The polypeptide is Probable translocation protein y4yO (Sinorhizobium fredii (strain NBRC 101917 / NGR234)).